Consider the following 267-residue polypeptide: Putative carbamate hydrolase RutD (267 aa).

In terms of domain architecture, AB hydrolase-1 spans 14-115; it reads PVMVMISGLG…SALVIINGWL (102 aa).

Belongs to the AB hydrolase superfamily. Hydrolase RutD family.

It carries out the reaction carbamate + 2 H(+) = NH4(+) + CO2. Functionally, involved in pyrimidine catabolism. May facilitate the hydrolysis of carbamate, a reaction that can also occur spontaneously. This chain is Putative carbamate hydrolase RutD, found in Cronobacter turicensis (strain DSM 18703 / CCUG 55852 / LMG 23827 / z3032).